A 492-amino-acid polypeptide reads, in one-letter code: Trk system potassium uptake protein TrkI (492 aa).

Helical transmembrane passes span 20–40 (VLAV…LVLI), 47–67 (ALAF…SWIV), 81–101 (FVLT…PLVL), 143–163 (IMQW…LPFL), 196–216 (IYCG…MSPL), 246–266 (QLLW…VLYI), 282–302 (VQGL…WRVS), 334–354 (AWGA…GCSG), 403–423 (VVAF…GLSL), and 465–485 (WLLC…LVLL).

Belongs to the TrkH potassium transport family.

The protein resides in the cell inner membrane. Medium-affinity potassium transport system. Probably interacts with Trk system potassium uptake protein TrkA. Main K(+) transporter in osmotically adapted cells. The polypeptide is Trk system potassium uptake protein TrkI (trkI) (Halomonas elongata (strain ATCC 33173 / DSM 2581 / NBRC 15536 / NCIMB 2198 / 1H9)).